A 308-amino-acid chain; its full sequence is Exosporium protein A (308 aa).

It localises to the spore wall. This is Exosporium protein A from Clostridium sporogenes (strain ATCC 15579).